A 28-amino-acid polypeptide reads, in one-letter code: Apolipoprotein C-I (28 aa).

This sequence belongs to the apolipoprotein C1 family.

The protein localises to the secreted. Its function is as follows. Inhibitor of lipoprotein binding to the low density lipoprotein (LDL) receptor, LDL receptor-related protein, and very low density lipoprotein (VLDL) receptor. Associates with high density lipoproteins (HDL) and the triacylglycerol-rich lipoproteins in the plasma and makes up about 10% of the protein of the VLDL and 2% of that of HDL. Appears to interfere directly with fatty acid uptake and is also the major plasma inhibitor of cholesteryl ester transfer protein (CETP). Binds free fatty acids and reduces their intracellular esterification. Modulates the interaction of APOE with beta-migrating VLDL and inhibits binding of beta-VLDL to the LDL receptor-related protein. This Oryctolagus cuniculus (Rabbit) protein is Apolipoprotein C-I (APOC1).